Consider the following 354-residue polypeptide: NADH-quinone oxidoreductase subunit H (354 aa).

The next 8 membrane-spanning stretches (helical) occupy residues 23–43 (LVRA…LILW), 91–111 (YIIA…VIPF), 124–144 (LLYV…AGWA), 162–182 (ISYE…TGSL), 203–223 (ILSW…ISGV), 250–270 (GMAF…ISAL), 291–311 (IPGF…FIWL), and 330–350 (IFIP…VSPW).

It belongs to the complex I subunit 1 family. NDH-1 is composed of 14 different subunits. Subunits NuoA, H, J, K, L, M, N constitute the membrane sector of the complex.

Its subcellular location is the cell inner membrane. The enzyme catalyses a quinone + NADH + 5 H(+)(in) = a quinol + NAD(+) + 4 H(+)(out). Its function is as follows. NDH-1 shuttles electrons from NADH, via FMN and iron-sulfur (Fe-S) centers, to quinones in the respiratory chain. The immediate electron acceptor for the enzyme in this species is believed to be ubiquinone. Couples the redox reaction to proton translocation (for every two electrons transferred, four hydrogen ions are translocated across the cytoplasmic membrane), and thus conserves the redox energy in a proton gradient. This subunit may bind ubiquinone. The protein is NADH-quinone oxidoreductase subunit H of Ralstonia pickettii (strain 12J).